An 879-amino-acid polypeptide reads, in one-letter code: Phosphoenolpyruvate carboxylase (879 aa).

Residues H138 and K546 contribute to the active site.

The protein belongs to the PEPCase type 1 family. The cofactor is Mg(2+).

The enzyme catalyses oxaloacetate + phosphate = phosphoenolpyruvate + hydrogencarbonate. In terms of biological role, forms oxaloacetate, a four-carbon dicarboxylic acid source for the tricarboxylic acid cycle. The sequence is that of Phosphoenolpyruvate carboxylase from Pectobacterium carotovorum subsp. carotovorum (strain PC1).